Consider the following 134-residue polypeptide: MESLNEYMDKIINRLKAVNEKDELVDEGMRKLQKCQEKIMKTRIDAQKHIDERHEQQSFEQQLLNKNMFETEQLEEKLKRLDDENKIGNEREFNKKLEAISAKWTDDVNLLKTTPNEPNDGNRKKLSNLSNILV.

The protein localises to the nucleus. It is found in the chromosome. Its subcellular location is the centromere. It localises to the kinetochore. This is Kinetochore-binding protein 3 (kbp-3) from Caenorhabditis elegans.